The following is a 259-amino-acid chain: Global transcriptional regulator CodY (259 aa).

Residues 1–155 (MDLLSRARKI…GATVVGMEIL (155 aa)) are GAF domain. Positions 203–222 (ASKIADRVGITRSVIVNALR) form a DNA-binding region, H-T-H motif. Phosphoserine is present on serine 215.

Belongs to the CodY family.

Its subcellular location is the cytoplasm. Its function is as follows. DNA-binding global transcriptional regulator which is involved in the adaptive response to starvation and acts by directly or indirectly controlling the expression of numerous genes in response to nutrient availability. During rapid exponential growth, CodY is highly active and represses genes whose products allow adaptation to nutrient depletion. In Oceanobacillus iheyensis (strain DSM 14371 / CIP 107618 / JCM 11309 / KCTC 3954 / HTE831), this protein is Global transcriptional regulator CodY.